A 457-amino-acid chain; its full sequence is Heme sensor protein HssS (457 aa).

2 consecutive transmembrane segments (helical) span residues 9–29 and 164–184; these read IAIY…VLTN and TFLA…VIAS. In terms of domain architecture, HAMP spans 186–238; that stretch reads YSIIRPVKKLKLATERLIDGDFETPIKQTRKDEIGTLQYHFNKMRESLGQVDQ. Residues 246–456 form the Histidine kinase domain; it reads NVSHEIKTPL…TFTITLPNNS (211 aa). Phosphohistidine; by autocatalysis is present on His-249.

Post-translationally, autophosphorylated.

The protein localises to the cell membrane. The enzyme catalyses ATP + protein L-histidine = ADP + protein N-phospho-L-histidine.. In terms of biological role, member of the two-component regulatory system HssS/HssR involved in intracellular heme homeostasis and tempering of staphylococcal virulence. HssS functions as a heme sensor histidine kinase which is autophosphorylated at a histidine residue and transfers its phosphate group to an aspartate residue of HssR. HssR/HssS activates the expression of hrtAB, an efflux pump, in response to extracellular heme, hemin, hemoglobin or blood. In Staphylococcus aureus (strain Mu3 / ATCC 700698), this protein is Heme sensor protein HssS (hssS).